The sequence spans 262 residues: MQTIIRVEKLAKTFNQHQALHAVDLNIHHGEMVALLGPSGSGKSTLLRHLSGLITGDKSVGSHIELLGRTVQREGRLARDIRKSRAHTGYIFQQFNLVNRLSVLENVLIGALGSTPFWRTCFSWFTGEQKQRALQALTRVGMVHFAHQRVSTLSGGQQQRVAIARALMQQAKVILADEPIASLDPESARIVMDTLRDINQNDGITVVVTLHQVDYALRYCERIVALRQGHVFYDGSSQQFDNERFDHLYRSINRVEENAKAA.

The 249-residue stretch at 5-253 (IRVEKLAKTF…RFDHLYRSIN (249 aa)) folds into the ABC transporter domain. Position 37–44 (37–44 (GPSGSGKS)) interacts with ATP.

It belongs to the ABC transporter superfamily. Phosphonates importer (TC 3.A.1.9.1) family. In terms of assembly, the complex is composed of two ATP-binding proteins (PhnC), two transmembrane proteins (PhnE) and a solute-binding protein (PhnD).

The protein localises to the cell inner membrane. The catalysed reaction is phosphonate(out) + ATP + H2O = phosphonate(in) + ADP + phosphate + H(+). Its function is as follows. Part of the ABC transporter complex PhnCDE involved in phosphonates, phosphate esters, phosphite and phosphate import. Responsible for energy coupling to the transport system. The chain is Phosphonates import ATP-binding protein PhnC from Escherichia coli (strain K12).